We begin with the raw amino-acid sequence, 482 residues long: Alanine aminotransferase 2 (482 aa).

N6-(pyridoxal phosphate)lysine is present on Lys-299.

Belongs to the class-I pyridoxal-phosphate-dependent aminotransferase family. Alanine aminotransferase subfamily. Homodimer. The cofactor is pyridoxal 5'-phosphate. Post-translationally, the N-terminus is blocked. Mesophyll and bundle sheath cells.

It carries out the reaction L-alanine + 2-oxoglutarate = pyruvate + L-glutamate. Its pathway is photosynthesis; C4 acid pathway. The protein operates within amino-acid degradation; L-alanine degradation via transaminase pathway; pyruvate from L-alanine: step 1/1. Functionally, transfer of C3 units between the cytosol of mesophyll and bundle sheath cells to maintain a nitrogen-carbon balance in the C4-dicarboxylic pathway. The polypeptide is Alanine aminotransferase 2 (Panicum miliaceum (Proso millet)).